The following is a 190-amino-acid chain: MGRVTTPSEEDSNNGLPVQQPGTPNQRTRVPVSQFAPPNYQQANVNLSVGRPWSTGLFDCQADQANAVLTTIVPCVTFGQIAEVMDEGEMTCPLGTFMYLLMMPALCSHWVMGSKYREKMRRKFNLVEAPYSDCASHVLCPCCSLCQEYRELKIRNLDPSLGWNGILAQGQGQYEREAPSFAPTNQYMSK.

A disordered region spans residues 1-31; the sequence is MGRVTTPSEEDSNNGLPVQQPGTPNQRTRVP. The span at 13-28 shows a compositional bias: polar residues; it reads NNGLPVQQPGTPNQRT. Thr-23 is modified (phosphothreonine). A helical transmembrane segment spans residues 94-113; it reads LGTFMYLLMMPALCSHWVMG.

It belongs to the cornifelin family.

It is found in the cell membrane. Its function is as follows. May be involved in heavy metals transport. The polypeptide is Protein PLANT CADMIUM RESISTANCE 8 (PCR8) (Arabidopsis thaliana (Mouse-ear cress)).